The sequence spans 172 residues: 3-hydroxydecanoyl-[acyl-carrier-protein] dehydratase (172 aa).

Residue His71 is part of the active site.

It belongs to the thioester dehydratase family. FabA subfamily. In terms of assembly, homodimer.

It is found in the cytoplasm. The catalysed reaction is a (3R)-hydroxyacyl-[ACP] = a (2E)-enoyl-[ACP] + H2O. The enzyme catalyses (3R)-hydroxydecanoyl-[ACP] = (2E)-decenoyl-[ACP] + H2O. It catalyses the reaction (2E)-decenoyl-[ACP] = (3Z)-decenoyl-[ACP]. It functions in the pathway lipid metabolism; fatty acid biosynthesis. In terms of biological role, necessary for the introduction of cis unsaturation into fatty acids. Catalyzes the dehydration of (3R)-3-hydroxydecanoyl-ACP to E-(2)-decenoyl-ACP and then its isomerization to Z-(3)-decenoyl-ACP. Can catalyze the dehydratase reaction for beta-hydroxyacyl-ACPs with saturated chain lengths up to 16:0, being most active on intermediate chain length. The chain is 3-hydroxydecanoyl-[acyl-carrier-protein] dehydratase from Pectobacterium carotovorum subsp. carotovorum (strain PC1).